Consider the following 161-residue polypeptide: Regulator of ribonuclease activity A (161 aa).

The protein belongs to the RraA family. In terms of assembly, homotrimer. Binds to both RNA-binding sites in the C-terminal region of Rne and to RhlB.

The protein localises to the cytoplasm. Globally modulates RNA abundance by binding to RNase E (Rne) and regulating its endonucleolytic activity. Can modulate Rne action in a substrate-dependent manner by altering the composition of the degradosome. Modulates RNA-binding and helicase activities of the degradosome. This chain is Regulator of ribonuclease activity A, found in Yersinia pseudotuberculosis serotype O:1b (strain IP 31758).